Consider the following 437-residue polypeptide: Phosphoglucosamine mutase (437 aa).

Ser-101 functions as the Phosphoserine intermediate in the catalytic mechanism. Residues Ser-101, Asp-234, Asp-236, and Asp-238 each coordinate Mg(2+). Phosphoserine is present on Ser-101.

Belongs to the phosphohexose mutase family. Mg(2+) serves as cofactor. Post-translationally, activated by phosphorylation.

The catalysed reaction is alpha-D-glucosamine 1-phosphate = D-glucosamine 6-phosphate. Catalyzes the conversion of glucosamine-6-phosphate to glucosamine-1-phosphate. This is Phosphoglucosamine mutase from Thermus thermophilus (strain ATCC BAA-163 / DSM 7039 / HB27).